A 255-amino-acid chain; its full sequence is MDVEVKKENQNTQLKDHEVKELIKNSQNGDQKARDLLIEKNMRLVWSVVQRFLNRGYEPDDLFQIGCIGLLKSVDKFDLSYDVRFSTYAVPMIIGEIQRFIRDDGTVKVSRSLKELGNKIRRAKEELSKSNGRIPTVQEIADYLEISSEEVVMAQEAVRSPSSIHETVYENDGDPITLLDQIADQSEEKWFDKIALKEAIKDLDEREKLIVYLRYYKDKTQSEVADRLGISQVQVSRLEKKILKQIKNQMDHFES.

The Polymerase core binding motif lies at 61-74 (DLFQIGCIGLLKSV). The segment at residues 221–240 (QSEVADRLGISQVQVSRLEK) is a DNA-binding region (H-T-H motif).

The protein belongs to the sigma-70 factor family.

Functionally, sigma factors are initiation factors that promote the attachment of RNA polymerase to specific initiation sites and are then released. This sigma factor is responsible for the expression of sporulation specific genes. This chain is RNA polymerase sigma-F factor (sigF), found in Bacillus licheniformis.